The sequence spans 469 residues: Cyclin-dependent kinase 14 (469 aa).

3 positions are modified to phosphoserine: S24, S78, and S95. The segment at 103 to 133 (FKTSSTGKESPKVRRHSSPSSPTSPKFGKAD) is disordered. A Phosphoserine modification is found at S134. A Protein kinase domain is found at 135-419 (YEKLEKLGEG…AQAALSHEYF (285 aa)). Residues 141-149 (LGEGSYATV) and K164 each bind ATP. Catalysis depends on D256, which acts as the Proton acceptor. A disordered region spans residues 449–469 (ESMRAFGKNNSYGKSLSNSKH). The span at 456–469 (KNNSYGKSLSNSKH) shows a compositional bias: polar residues.

The protein belongs to the protein kinase superfamily. CMGC Ser/Thr protein kinase family. CDC2/CDKX subfamily. As to quaternary structure, found in a complex with LRP6, CCNY and CAPRIN2 during G2/M stage; CAPRIN2 functions as a scaffold for the complex by binding to CCNY via its N terminus and to CDK14 via its C terminus. Interacts with CCNY; CCNY mediates its recruitment to the plasma membrane and promotes phosphorylation of LRP6. Interacts with CCDN3 and CDKN1A. Interacts with SEPT8. Interacts with 14-3-3 proteina YWHAB, YWHAE, YWHAH and YWHAQ. As to expression, highly expressed in brain, pancreas, kidney, heart, testis and ovary. Also detected at lower levels in other tissues except in spleen and thymus where expression is barely detected.

It localises to the cell membrane. Its subcellular location is the cytoplasm. It is found in the nucleus. It catalyses the reaction L-seryl-[protein] + ATP = O-phospho-L-seryl-[protein] + ADP + H(+). The enzyme catalyses L-threonyl-[protein] + ATP = O-phospho-L-threonyl-[protein] + ADP + H(+). Its activity is regulated as follows. Serine/threonine-protein kinase activity is promoted by associated cyclins CCDN3 and CCNY and repressed by CDKN1A. In terms of biological role, serine/threonine-protein kinase involved in the control of the eukaryotic cell cycle, whose activity is controlled by an associated cyclin. Acts as a cell-cycle regulator of Wnt signaling pathway during G2/M phase by mediating the phosphorylation of LRP6 at 'Ser-1490', leading to the activation of the Wnt signaling pathway. Acts as a regulator of cell cycle progression and cell proliferation via its interaction with CCDN3. Phosphorylates RB1 in vitro, however the relevance of such result remains to be confirmed in vivo. May also play a role in meiosis, neuron differentiation and may indirectly act as a negative regulator of insulin-responsive glucose transport. In Homo sapiens (Human), this protein is Cyclin-dependent kinase 14 (CDK14).